Reading from the N-terminus, the 226-residue chain is Sugar fermentation stimulation protein homolog (226 aa).

Belongs to the SfsA family.

The polypeptide is Sugar fermentation stimulation protein homolog (Ruminiclostridium cellulolyticum (strain ATCC 35319 / DSM 5812 / JCM 6584 / H10) (Clostridium cellulolyticum)).